The primary structure comprises 547 residues: Delta-guaiene synthase 1 (547 aa).

Residues Asp-299, Asp-303, and Asp-444 each contribute to the Mg(2+) site. The DDXXD motif signature appears at 299 to 303 (DDTYD).

It belongs to the terpene synthase family. Mg(2+) is required as a cofactor.

The catalysed reaction is (2E,6E)-farnesyl diphosphate = delta-guaiene + diphosphate. The enzyme catalyses (2E,6E)-farnesyl diphosphate = alpha-guaiene + diphosphate. It participates in secondary metabolite biosynthesis; terpenoid biosynthesis. Functionally, sesquiterpene synthase involved in the biosynthesis of delta-guaiene (81.2%) and alpha-guaiene (18.1%), two structures composed of five- and seven-membered rings. Also produces 0.7% of alpha-humulene. This chain is Delta-guaiene synthase 1 (C2), found in Aquilaria crassna (Eagle wood).